A 224-amino-acid polypeptide reads, in one-letter code: uncharacterized protein (224 aa).

A signal peptide spans 1 to 17 (MFTILLYFLVLFWVTNA).

This is an uncharacterized protein from Caenorhabditis elegans.